We begin with the raw amino-acid sequence, 160 residues long: Cytochrome b6-f complex subunit 4 (160 aa).

Helical transmembrane passes span 36–56, 95–115, and 131–151; these read LLYI…GLAV, LLGV…PFLE, and TVFL…TLPI.

It belongs to the cytochrome b family. PetD subfamily. The 4 large subunits of the cytochrome b6-f complex are cytochrome b6, subunit IV (17 kDa polypeptide, petD), cytochrome f and the Rieske protein, while the 4 small subunits are petG, petL, petM and petN. The complex functions as a dimer.

It is found in the plastid. The protein resides in the chloroplast thylakoid membrane. Component of the cytochrome b6-f complex, which mediates electron transfer between photosystem II (PSII) and photosystem I (PSI), cyclic electron flow around PSI, and state transitions. The chain is Cytochrome b6-f complex subunit 4 from Solanum bulbocastanum (Wild potato).